The following is a 190-amino-acid chain: Xanthine phosphoribosyltransferase 1 (190 aa).

The xanthine site is built by Leu20 and Asn27. 128 to 132 (ANGEA) provides a ligand contact to 5-phospho-alpha-D-ribose 1-diphosphate. Lys156 is a binding site for xanthine.

This sequence belongs to the purine/pyrimidine phosphoribosyltransferase family. Xpt subfamily. As to quaternary structure, homodimer.

Its subcellular location is the cytoplasm. It carries out the reaction XMP + diphosphate = xanthine + 5-phospho-alpha-D-ribose 1-diphosphate. Its pathway is purine metabolism; XMP biosynthesis via salvage pathway; XMP from xanthine: step 1/1. Converts the preformed base xanthine, a product of nucleic acid breakdown, to xanthosine 5'-monophosphate (XMP), so it can be reused for RNA or DNA synthesis. The protein is Xanthine phosphoribosyltransferase 1 of Clostridium botulinum (strain ATCC 19397 / Type A).